We begin with the raw amino-acid sequence, 271 residues long: 4-hydroxy-tetrahydrodipicolinate reductase (271 aa).

Residues 11-16 and glutamate 37 contribute to the NAD(+) site; that span reads GGSGRM. Arginine 38 is an NADP(+) binding site. Residues 101-103 and 125-128 each bind NAD(+); these read GTT and APNM. Histidine 158 serves as the catalytic Proton donor/acceptor. Histidine 159 provides a ligand contact to (S)-2,3,4,5-tetrahydrodipicolinate. The Proton donor role is filled by lysine 162. 168–169 contributes to the (S)-2,3,4,5-tetrahydrodipicolinate binding site; the sequence is GT.

This sequence belongs to the DapB family.

Its subcellular location is the cytoplasm. The enzyme catalyses (S)-2,3,4,5-tetrahydrodipicolinate + NAD(+) + H2O = (2S,4S)-4-hydroxy-2,3,4,5-tetrahydrodipicolinate + NADH + H(+). It carries out the reaction (S)-2,3,4,5-tetrahydrodipicolinate + NADP(+) + H2O = (2S,4S)-4-hydroxy-2,3,4,5-tetrahydrodipicolinate + NADPH + H(+). The protein operates within amino-acid biosynthesis; L-lysine biosynthesis via DAP pathway; (S)-tetrahydrodipicolinate from L-aspartate: step 4/4. Functionally, catalyzes the conversion of 4-hydroxy-tetrahydrodipicolinate (HTPA) to tetrahydrodipicolinate. This is 4-hydroxy-tetrahydrodipicolinate reductase from Shewanella halifaxensis (strain HAW-EB4).